The chain runs to 477 residues: Bifunctional protein HldE (477 aa).

Residues 1 to 318 (MKVNLPAFER…ENAVRGRADT (318 aa)) are ribokinase. Residue 195–198 (NLSE) coordinates ATP. The active site involves Asp-264. A cytidylyltransferase region spans residues 344–477 (MTNGVFDILH…IKKIQTESEK (134 aa)).

The protein in the N-terminal section; belongs to the carbohydrate kinase PfkB family. This sequence in the C-terminal section; belongs to the cytidylyltransferase family. As to quaternary structure, homodimer.

The catalysed reaction is D-glycero-beta-D-manno-heptose 7-phosphate + ATP = D-glycero-beta-D-manno-heptose 1,7-bisphosphate + ADP + H(+). The enzyme catalyses D-glycero-beta-D-manno-heptose 1-phosphate + ATP + H(+) = ADP-D-glycero-beta-D-manno-heptose + diphosphate. The protein operates within nucleotide-sugar biosynthesis; ADP-L-glycero-beta-D-manno-heptose biosynthesis; ADP-L-glycero-beta-D-manno-heptose from D-glycero-beta-D-manno-heptose 7-phosphate: step 1/4. It functions in the pathway nucleotide-sugar biosynthesis; ADP-L-glycero-beta-D-manno-heptose biosynthesis; ADP-L-glycero-beta-D-manno-heptose from D-glycero-beta-D-manno-heptose 7-phosphate: step 3/4. Its function is as follows. Catalyzes the phosphorylation of D-glycero-D-manno-heptose 7-phosphate at the C-1 position to selectively form D-glycero-beta-D-manno-heptose-1,7-bisphosphate. Catalyzes the ADP transfer from ATP to D-glycero-beta-D-manno-heptose 1-phosphate, yielding ADP-D-glycero-beta-D-manno-heptose. This is Bifunctional protein HldE from Salmonella paratyphi A (strain ATCC 9150 / SARB42).